A 440-amino-acid polypeptide reads, in one-letter code: Adenylosuccinate lyase (440 aa).

N(6)-(1,2-dicarboxyethyl)-AMP contacts are provided by residues 4–5 (RY), 67–69 (KHD), and 93–94 (TS). His-141 functions as the Proton donor/acceptor in the catalytic mechanism. Gln-212 is a N(6)-(1,2-dicarboxyethyl)-AMP binding site. Ser-262 acts as the Proton donor/acceptor in catalysis. Residues Ser-263, 268 to 270 (KRN), Asn-276, and 307 to 311 (SVERF) contribute to the N(6)-(1,2-dicarboxyethyl)-AMP site.

It belongs to the lyase 1 family. Adenylosuccinate lyase subfamily. As to quaternary structure, homotetramer. Residues from neighboring subunits contribute catalytic and substrate-binding residues to each active site.

The catalysed reaction is N(6)-(1,2-dicarboxyethyl)-AMP = fumarate + AMP. It carries out the reaction (2S)-2-[5-amino-1-(5-phospho-beta-D-ribosyl)imidazole-4-carboxamido]succinate = 5-amino-1-(5-phospho-beta-D-ribosyl)imidazole-4-carboxamide + fumarate. Its pathway is purine metabolism; AMP biosynthesis via de novo pathway; AMP from IMP: step 2/2. The protein operates within purine metabolism; IMP biosynthesis via de novo pathway; 5-amino-1-(5-phospho-D-ribosyl)imidazole-4-carboxamide from 5-amino-1-(5-phospho-D-ribosyl)imidazole-4-carboxylate: step 2/2. Its function is as follows. Catalyzes two reactions in de novo purine nucleotide biosynthesis. Catalyzes the breakdown of 5-aminoimidazole- (N-succinylocarboxamide) ribotide (SAICAR or 2-[5-amino-1-(5-phospho-beta-D-ribosyl)imidazole-4-carboxamido]succinate) to 5-aminoimidazole-4-carboxamide ribotide (AICAR or 5-amino-1-(5-phospho-beta-D-ribosyl)imidazole-4-carboxamide) and fumarate, and of adenylosuccinate (ADS or N(6)-(1,2-dicarboxyethyl)-AMP) to adenosine monophosphate (AMP) and fumarate. The polypeptide is Adenylosuccinate lyase (purB) (Helicobacter pylori (strain ATCC 700392 / 26695) (Campylobacter pylori)).